A 457-amino-acid chain; its full sequence is MTKKVYVKTFGCQMNEYDSDKMVDVLNAAEGLEKTDSPEDADIILFNTCSVREKAQEKVFSDLGRVRELKEAKPDLLIGVGGCVASQEGASIVARAPYVDLVFGPQTLHRLPQMIDARRESGRAQVDITFPEIEKFDHLPPARVEGPSAFVSIMEGCSKYCSYCVVPYTRGDEVSRPLDDVLTEIAGLADQGVREVTLLGQNVNAYRGALTAGAHEIADFATLIEYVADIPGIERIRYTTSHPKEFTQRLLDVYAKVPKLVDHLHLPVQHGSDRILMAMKRGYTVLEYKSLIRKLRAIRPNLSLSTDIIVGFPGETEADFDKTMALVHEMSYDTSFSFIYSPRPGTPAANLADDTPREVKLERLQHLQATIEENVARISQSMLGKVERILVEGPSRKDPNELAGRTENNRVVNFPAPLTAHARLIGQMIDVKINHAYPHSLRGELVLAHDDASAATH.

One can recognise an MTTase N-terminal domain in the interval 3–120 (KKVYVKTFGC…LPQMIDARRE (118 aa)). The [4Fe-4S] cluster site is built by C12, C49, C83, C157, C161, and C164. One can recognise a Radical SAM core domain in the interval 143–377 (RVEGPSAFVS…QATIEENVAR (235 aa)). The 68-residue stretch at 380-447 (QSMLGKVERI…PHSLRGELVL (68 aa)) folds into the TRAM domain.

The protein belongs to the methylthiotransferase family. MiaB subfamily. In terms of assembly, monomer. [4Fe-4S] cluster serves as cofactor.

It is found in the cytoplasm. It carries out the reaction N(6)-dimethylallyladenosine(37) in tRNA + (sulfur carrier)-SH + AH2 + 2 S-adenosyl-L-methionine = 2-methylsulfanyl-N(6)-dimethylallyladenosine(37) in tRNA + (sulfur carrier)-H + 5'-deoxyadenosine + L-methionine + A + S-adenosyl-L-homocysteine + 2 H(+). Catalyzes the methylthiolation of N6-(dimethylallyl)adenosine (i(6)A), leading to the formation of 2-methylthio-N6-(dimethylallyl)adenosine (ms(2)i(6)A) at position 37 in tRNAs that read codons beginning with uridine. This chain is tRNA-2-methylthio-N(6)-dimethylallyladenosine synthase, found in Burkholderia thailandensis (strain ATCC 700388 / DSM 13276 / CCUG 48851 / CIP 106301 / E264).